The sequence spans 237 residues: Bax inhibitor 1 (237 aa).

The Cytoplasmic segment spans residues 1-29 (MNIFDRKINFDALLKFSHITPSTQQHLKK). K7 is covalently cross-linked (Glycyl lysine isopeptide (Lys-Gly) (interchain with G-Cter in ubiquitin)). The chain crosses the membrane as a helical span at residues 30 to 50 (VYASFALCMFVAAAGAYVHVV). Residues 51–52 (TR) lie on the Lumenal side of the membrane. Residues 53-73 (FIQAGLLSALGSLGLMIWLMA) traverse the membrane as a helical segment. The Cytoplasmic portion of the chain corresponds to 74–86 (TPHSHETEQKRLG). The chain crosses the membrane as a helical span at residues 87–107 (LLAGFAFLTGVGLGPALDLCI). The Lumenal segment spans residues 108 to 112 (AINPS). A helical transmembrane segment spans residues 113–133 (ILPTAFMGTAMIFTCFTLSAL). Residues 134–139 (YARRRS) are Cytoplasmic-facing. Residues 140–160 (YLFLGGILMSAMSLMVLSSLG) traverse the membrane as a helical segment. The Lumenal portion of the chain corresponds to 161 to 166 (NLFFGS). Residues 167-187 (IWLFQANLYVGLVVMCGFVLF) form a helical membrane-spanning segment. Topologically, residues 188–206 (DTQLIIEKAENGDKDYIWH) are cytoplasmic. The segment at residues 207-227 (CVDLFSDFVTLFRKLMMILAM) is an intramembrane region (helical). Topologically, residues 228–237 (NEKDKKKEKK) are cytoplasmic.

This sequence belongs to the BI1 family. As to quaternary structure, interacts with BCL2 and BCL2L1. Interacts with ERN1. In terms of processing, ubiquitinated by BFAR, leading to proteasomal degradation.

It localises to the endoplasmic reticulum membrane. Endoplasmic reticulum (ER)-resident protein that confers cellular protection as an anti-apoptotic protein by limiting multiple stress-inducing pathways surrounding the endoplasmic reticulum and mitochondria. Inhibits the activities of the key sensor for the endoplasmic reticulum unfolded protein response IRE1alpha/ERN1 both directly and by blocking BAX/BAK binding. Modulates ER calcium homeostasis by acting as a calcium-leak channel. Negatively regulates autophagy and autophagosome formation, especially during periods of nutrient deprivation, and reduces cell survival during starvation. The sequence is that of Bax inhibitor 1 (TMBIM6) from Sus scrofa (Pig).